The sequence spans 1203 residues: MIDVNNFEYMKIGLASPDKIRSWSYGEVKKPETINYRTLKPEKDGLFCERIFGPQKDWECHCGKYKRVRYKGVVCDRCGVEVTRAKVRRERMGHIELAAPVSHIWYFKGIPSRMGLVLDMSPRALEEVIYFASYVVTESGDTPLDKKQLLSEKEYRAYRDRYGSTFQAAMGAEAIKKLLQDIDLDKEVDFLKEELKTAQGQRRTRAIKRLEVLEAFRNSGNEPSWMILDVLPVIPPELRPMVQLDGGRFATSDLNDLYRRVINRNNRLKRLLDLGAPSIIVQNEKRMLQEAVDALIDNGRRGRPVTGPGNRPLKSLSHMLKGKQGRFRQNLLGKRVDYSGRSVIVVGPNLKMYQCGLPKEMALELFKPFVMKELVEKGLAHNIKSAKRKIERVQPEVWDVLESVIKEHPVLLNRAPTLHRLGIQAFEPTLVEGRAIRLHPLVCTAYNADFDGDQMAVHVPLSSEAQAEARLLMLAAQNILNPKDGKPVVTPSQDMVLGNYYLTLEREGAIGEGMVFKDANEALLAYQNGYVHLHTRVAVAASAVNNATFTEEQKSMLLLTTVGKLIFNEILPESFPYINEPTNSNLEKETPAKYFVEKGANIKEIIASREEVAPFSKKILGNIIAEVFKRFQITETSRMLDRMKNLGFKYSTKAGITVGVSDILVLGEKDEILHEAQAKVDNVIKQFRRGLITEEERYDRVISIWSNAKDVIQGKLMKSLNKRNPIFMMSDSGARGNASNFTQLAGMRGLMANPSGRIIELPIKSSFREGLTVLEYFISTHGARKGLADTALKTADSGYLTRRLVDVAQDVIVREDDCGTDRGLLIGAIKEGNEVIESLYDRLVGRFARKTVKHPETGEVLVAENQLITEDIAHIVENSGVETVNIRSAFTCNTRHGVCKKCYGRNLATGTDVEVGEAVGIIAAQSIGEPGTQLTMRTFHTGGVAGDDITQGLPRIQEIFEARNPKGQAVISEIDGVIAAINDVKDRQEVVVQGEVEARTYAIPYGARLKVTPGQPISHGKELTEGSIDPKELLKVTDITAVQEYLLREVQKVYRMQGVEIGDKHVEVMVRQMLRKVRVSDAGETDVLPGTLLDIHQFTDANAKVLLQGKQPATARPVLLGITKASLETDSFLSAASFQETTRVLTDAAIKGKRDELLGLKENVIIGKLVPAGTGMNRYRKVDLVKTTQDDMNVENDEVYVEQ.

Zn(2+)-binding residues include Cys60, Cys62, Cys75, and Cys78. Asp449, Asp451, and Asp453 together coordinate Mg(2+). The Zn(2+) site is built by Cys818, Cys892, Cys899, and Cys902.

This sequence belongs to the RNA polymerase beta' chain family. As to quaternary structure, the RNAP catalytic core consists of 2 alpha, 1 beta, 1 beta' and 1 omega subunit. When a sigma factor is associated with the core the holoenzyme is formed, which can initiate transcription. Mg(2+) serves as cofactor. The cofactor is Zn(2+).

The enzyme catalyses RNA(n) + a ribonucleoside 5'-triphosphate = RNA(n+1) + diphosphate. Its function is as follows. DNA-dependent RNA polymerase catalyzes the transcription of DNA into RNA using the four ribonucleoside triphosphates as substrates. This chain is DNA-directed RNA polymerase subunit beta', found in Bacillus cereus (strain ATCC 14579 / DSM 31 / CCUG 7414 / JCM 2152 / NBRC 15305 / NCIMB 9373 / NCTC 2599 / NRRL B-3711).